Consider the following 305-residue polypeptide: 3-methyl-2-oxobutanoate hydroxymethyltransferase (305 aa).

Mg(2+) is bound by residues D52 and D95. 3-methyl-2-oxobutanoate is bound by residues 52–53 (DS), D95, and K125. E127 contributes to the Mg(2+) binding site. The Proton acceptor role is filled by E194.

The protein belongs to the PanB family. As to quaternary structure, homodecamer; pentamer of dimers. Requires Mg(2+) as cofactor.

The protein localises to the cytoplasm. The catalysed reaction is 3-methyl-2-oxobutanoate + (6R)-5,10-methylene-5,6,7,8-tetrahydrofolate + H2O = 2-dehydropantoate + (6S)-5,6,7,8-tetrahydrofolate. It functions in the pathway cofactor biosynthesis; (R)-pantothenate biosynthesis; (R)-pantoate from 3-methyl-2-oxobutanoate: step 1/2. In terms of biological role, catalyzes the reversible reaction in which hydroxymethyl group from 5,10-methylenetetrahydrofolate is transferred onto alpha-ketoisovalerate to form ketopantoate. This Anaeromyxobacter sp. (strain Fw109-5) protein is 3-methyl-2-oxobutanoate hydroxymethyltransferase.